A 219-amino-acid polypeptide reads, in one-letter code: uncharacterized protein (219 aa).

To T.pallidum TP_0126.

This is an uncharacterized protein from Treponema pallidum (strain Nichols).